Reading from the N-terminus, the 28-residue chain is C-hordein (28 aa).

Residues 1 to 28 are disordered; the sequence is RQLNPSSQELQSPQQSYLQQPYPQNPYL.

Developing endosperm.

In terms of biological role, sulfur-poor seed storage protein. The chain is C-hordein from Hordeum vulgare subsp. spontaneum (Wild barley).